We begin with the raw amino-acid sequence, 174 residues long: MKLTLEPAPRCLHEYVSQLLEDWQPECLSCEYSHGGSSPPSLHDLFDLELENSRSPSPLLCDWCAEADSESTISTETDVGFTLNTPPVSPLPSYSTSPASIPEDMLLCLEEMPTFDDGDEVRSATTSFEHWENNFDPNVGSFFGCLRCAYYQEQGENSICGLCYLKALAEGKIF.

Positions P40 to L48 are interaction with RB1 in competition with E2F1. The short motif at L106–E110 is the LXCXE motif, interaction with host RB1 element. The segment at C145–C163 is a zinc-finger region.

This sequence belongs to the adenoviridae E1A protein family. As to quaternary structure, interacts with host UBE2I; this interaction interferes with polySUMOylation. Interacts with host RB1; this interaction induces the aberrant dissociation of RB1-E2F1 complex thereby disrupting the activity of RB1 and activating E2F1-regulated genes. Interacts with host ATF7; the interaction enhances ATF7-mediated viral transactivation activity which requires the zinc binding domains of both proteins. Isoform early E1A 32 kDa protein and isoform early E1A 26 kDa protein interact (via N-terminus) with CUL1 and E3 ubiquitin ligase RBX1; these interactions inhibit RBX1-CUL1-dependent elongation reaction of ubiquitin chains and attenuate ubiquitination of SCF(FBXW7) target proteins. Interacts (via PXLXP motif) with host ZMYND11/BS69 (via MYND-type zinc finger); this interaction inhibits E1A mediated transactivation. Interacts with host EP300; this interaction stimulates the acetylation of RB1 by recruiting EP300 and RB1 into a multimeric-protein complex. Interacts with host CTBP1 and CTBP2; this interaction seems to potentiate viral replication. Interacts with host DCAF7. Interacts with host DYRK1A. Interacts with host KPNA4; this interaction allows E1A import into the host nucleus. Interacts with host EP400; this interaction stabilizes MYC. Interacts with host TBP protein; this interaction probably disrupts the TBP-TATA complex.

The protein localises to the host nucleus. Its function is as follows. Plays a role in viral genome replication by driving entry of quiescent cells into the cell cycle. Stimulation of progression from G1 to S phase allows the virus to efficiently use the cellular DNA replicating machinery to achieve viral genome replication. E1A protein has both transforming and trans-activating activities. Induces the disassembly of the E2F1 transcription factor from RB1 by direct competition for the same binding site on RB1, with subsequent transcriptional activation of E2F1-regulated S-phase genes and of the E2 region of the adenoviral genome. Release of E2F1 leads to the ARF-mediated inhibition of MDM2 and causes TP53/p53 to accumulate because it is not targeted for degradation by MDM2-mediated ubiquitination anymore. This increase in TP53, in turn, would arrest the cell proliferation and direct its death but this effect is counteracted by the viral protein E1B-55K. Inactivation of the ability of RB1 to arrest the cell cycle is critical for cellular transformation, uncontrolled cellular growth and proliferation induced by viral infection. Interaction with RBX1 and CUL1 inhibits ubiquitination of the proteins targeted by SCF(FBXW7) ubiquitin ligase complex, and may be linked to unregulated host cell proliferation. The tumorigenesis-restraining activity of E1A may be related to the disruption of the host CtBP-CtIP complex through the CtBP binding motif. The polypeptide is Early E1A protein (Canine adenovirus serotype 1 (strain RI261) (CAdV-1)).